The primary structure comprises 341 residues: N-acetyl-gamma-glutamyl-phosphate reductase (341 aa).

The active site involves Cys-145.

This sequence belongs to the NAGSA dehydrogenase family. Type 1 subfamily.

It is found in the cytoplasm. The enzyme catalyses N-acetyl-L-glutamate 5-semialdehyde + phosphate + NADP(+) = N-acetyl-L-glutamyl 5-phosphate + NADPH + H(+). It functions in the pathway amino-acid biosynthesis; L-arginine biosynthesis; N(2)-acetyl-L-ornithine from L-glutamate: step 3/4. Functionally, catalyzes the NADPH-dependent reduction of N-acetyl-5-glutamyl phosphate to yield N-acetyl-L-glutamate 5-semialdehyde. The chain is N-acetyl-gamma-glutamyl-phosphate reductase from Streptomyces clavuligerus.